The following is a 407-amino-acid chain: Cathepsin D (407 aa).

The first 20 residues, 1–20 (MQTPGVLLLILGLLDASSSA), serve as a signal peptide directing secretion. Residues 21–64 (LIRIPLRKFTSIRRTMTEVGGSVEDLILKGPITKYSMQSSPRTK) constitute a propeptide, activation peptide. Positions 79-402 (YYGEIGIGTP…DREYNRVGFA (324 aa)) constitute a Peptidase A1 domain. Disulfide bonds link cysteine 91/cysteine 160 and cysteine 110/cysteine 117. The active site involves aspartate 97. Asparagine 134 and asparagine 258 each carry an N-linked (GlcNAc...) asparagine glycan. A disulfide bridge connects residues cysteine 281 and cysteine 285. Residue aspartate 290 is part of the active site. Cysteine 324 and cysteine 361 are disulfide-bonded.

The protein belongs to the peptidase A1 family. In terms of assembly, occurs as a mixture of both a single chain form and two types of two chain (light and heavy) forms. Interacts with ADAM30; this leads to activation of CTSD. N- and O-glycosylated. Post-translationally, undergoes proteolytic cleavage and activation by ADAM30.

It localises to the lysosome. Its subcellular location is the melanosome. It is found in the secreted. The protein localises to the extracellular space. The catalysed reaction is Specificity similar to, but narrower than, that of pepsin A. Does not cleave the 4-Gln-|-His-5 bond in B chain of insulin.. Acid protease active in intracellular protein breakdown. Plays a role in APP processing following cleavage and activation by ADAM30 which leads to APP degradation. The polypeptide is Cathepsin D (Ctsd) (Rattus norvegicus (Rat)).